A 290-amino-acid chain; its full sequence is Pyridoxal kinase PdxY (290 aa).

Residues S12 and T47–Q48 contribute to the substrate site. Residues D114, E151, K184, and R211–L214 each bind ATP. D225 serves as a coordination point for substrate.

The protein belongs to the pyridoxine kinase family. PdxY subfamily. As to quaternary structure, homodimer. Mg(2+) is required as a cofactor.

The enzyme catalyses pyridoxal + ATP = pyridoxal 5'-phosphate + ADP + H(+). It participates in cofactor metabolism; pyridoxal 5'-phosphate salvage; pyridoxal 5'-phosphate from pyridoxal: step 1/1. In terms of biological role, pyridoxal kinase involved in the salvage pathway of pyridoxal 5'-phosphate (PLP). Catalyzes the phosphorylation of pyridoxal to PLP. This is Pyridoxal kinase PdxY from Pseudomonas fluorescens (strain ATCC BAA-477 / NRRL B-23932 / Pf-5).